The following is a 232-amino-acid chain: Fibrillarin-like rRNA/tRNA 2'-O-methyltransferase (232 aa).

S-adenosyl-L-methionine contacts are provided by residues 89–90 (TT), 108–109 (EF), 133–134 (DA), and 153–156 (DIAQ).

This sequence belongs to the methyltransferase superfamily. Fibrillarin family. As to quaternary structure, interacts with nop5. Component of box C/D small ribonucleoprotein (sRNP) particles that contain rpl7ae, FlpA and nop5, plus a guide RNA.

Its function is as follows. Involved in pre-rRNA and tRNA processing. Utilizes the methyl donor S-adenosyl-L-methionine to catalyze the site-specific 2'-hydroxyl methylation of ribose moieties in rRNA and tRNA. Site specificity is provided by a guide RNA that base pairs with the substrate. Methylation occurs at a characteristic distance from the sequence involved in base pairing with the guide RNA. The polypeptide is Fibrillarin-like rRNA/tRNA 2'-O-methyltransferase (Saccharolobus islandicus (strain L.S.2.15 / Lassen #1) (Sulfolobus islandicus)).